We begin with the raw amino-acid sequence, 126 residues long: Large ribosomal subunit protein bL20c (126 aa).

This sequence belongs to the bacterial ribosomal protein bL20 family.

Its subcellular location is the plastid. The protein localises to the chloroplast. Functionally, binds directly to 23S ribosomal RNA and is necessary for the in vitro assembly process of the 50S ribosomal subunit. It is not involved in the protein synthesizing functions of that subunit. This chain is Large ribosomal subunit protein bL20c, found in Pelargonium hortorum (Common geranium).